Consider the following 121-residue polypeptide: Small ribosomal subunit protein bS16 (121 aa).

Residues 88-121 form a disordered region; sequence GKAKLEKEKKAKAKTKEEENEGSKTESGSNEAES. Positions 90 to 111 are enriched in basic and acidic residues; sequence AKLEKEKKAKAKTKEEENEGSK. The segment covering 112–121 has biased composition (polar residues); sequence TESGSNEAES.

The protein belongs to the bacterial ribosomal protein bS16 family.

This chain is Small ribosomal subunit protein bS16, found in Prochlorococcus marinus (strain MIT 9215).